The chain runs to 92 residues: Progonadoliberin-1 (92 aa).

The signal sequence occupies residues 1–23 (METIPKLMAAVVLLTVCLEGCSS). Residue Gln24 is modified to Pyrrolidone carboxylic acid. Gly33 carries the post-translational modification Glycine amide.

Belongs to the GnRH family. Post-translationally, the precursor is cleaved by ACE, which removes the Gly-Lys-Arg peptide at the C-terminus, leading to mature hormone. The mature form of Gonadoliberin-1 is also cleaved and degraded by ACE. As to expression, central nervous system.

It localises to the secreted. Its function is as follows. Stimulates the secretion of gonadotropins; it stimulates the secretion of both luteinizing and follicle-stimulating hormones. The polypeptide is Progonadoliberin-1 (Gnrh1) (Rattus norvegicus (Rat)).